Consider the following 300-residue polypeptide: 4-hydroxy-tetrahydrodipicolinate synthase (300 aa).

Thr45 lines the pyruvate pocket. The active-site Proton donor/acceptor is Tyr140. Lys169 functions as the Schiff-base intermediate with substrate in the catalytic mechanism. Ile210 provides a ligand contact to pyruvate.

This sequence belongs to the DapA family. As to quaternary structure, homotetramer; dimer of dimers.

The protein resides in the cytoplasm. The enzyme catalyses L-aspartate 4-semialdehyde + pyruvate = (2S,4S)-4-hydroxy-2,3,4,5-tetrahydrodipicolinate + H2O + H(+). Its pathway is amino-acid biosynthesis; L-lysine biosynthesis via DAP pathway; (S)-tetrahydrodipicolinate from L-aspartate: step 3/4. In terms of biological role, catalyzes the condensation of (S)-aspartate-beta-semialdehyde [(S)-ASA] and pyruvate to 4-hydroxy-tetrahydrodipicolinate (HTPA). The polypeptide is 4-hydroxy-tetrahydrodipicolinate synthase (Helicobacter pylori (strain J99 / ATCC 700824) (Campylobacter pylori J99)).